The sequence spans 185 residues: Putative RNA (cytidine(34)-2'-O)-methyltransferase (185 aa).

Ile80, Gly105, and Ile126 together coordinate S-adenosyl-L-methionine.

This sequence belongs to the class IV-like SAM-binding methyltransferase superfamily. RNA methyltransferase TrmH family. TrmL subfamily.

Its subcellular location is the cytoplasm. It carries out the reaction cytidine(34) in tRNA + S-adenosyl-L-methionine = 2'-O-methylcytidine(34) in tRNA + S-adenosyl-L-homocysteine + H(+). The enzyme catalyses 5-carboxymethylaminomethyluridine(34) in tRNA(Leu) + S-adenosyl-L-methionine = 5-carboxymethylaminomethyl-2'-O-methyluridine(34) in tRNA(Leu) + S-adenosyl-L-homocysteine + H(+). In terms of biological role, could methylate the ribose at the nucleotide 34 wobble position in tRNA. The chain is Putative RNA (cytidine(34)-2'-O)-methyltransferase from Lactobacillus gasseri (strain ATCC 33323 / DSM 20243 / BCRC 14619 / CIP 102991 / JCM 1131 / KCTC 3163 / NCIMB 11718 / NCTC 13722 / AM63).